We begin with the raw amino-acid sequence, 196 residues long: Large ribosomal subunit protein uL10 (196 aa).

Positions 163-196 are disordered; that stretch reads GAPAAAEAPAAEEAPAAEAAETEAPAEAAATEEN. The segment covering 164-196 has biased composition (low complexity); sequence APAAAEAPAAEEAPAAEAAETEAPAEAAATEEN.

It belongs to the universal ribosomal protein uL10 family. Part of the ribosomal stalk of the 50S ribosomal subunit. The N-terminus interacts with L11 and the large rRNA to form the base of the stalk. The C-terminus forms an elongated spine to which L12 dimers bind in a sequential fashion forming a multimeric L10(L12)X complex.

Forms part of the ribosomal stalk, playing a central role in the interaction of the ribosome with GTP-bound translation factors. In Arthrobacter sp. (strain FB24), this protein is Large ribosomal subunit protein uL10.